The chain runs to 339 residues: NADH-quinone oxidoreductase subunit H (339 aa).

9 helical membrane-spanning segments follow: residues Ile9 to Cys29, Pro50 to Phe70, Ile82 to Ile102, Val115 to Gly135, Met161 to Ile181, Met187 to Leu207, Met235 to Thr255, Ile275 to Ile295, and Gly311 to Val331.

The protein belongs to the complex I subunit 1 family. In terms of assembly, NDH-1 is composed of 14 different subunits. Subunits NuoA, H, J, K, L, M, N constitute the membrane sector of the complex.

The protein resides in the cell inner membrane. It catalyses the reaction a quinone + NADH + 5 H(+)(in) = a quinol + NAD(+) + 4 H(+)(out). In terms of biological role, NDH-1 shuttles electrons from NADH, via FMN and iron-sulfur (Fe-S) centers, to quinones in the respiratory chain. The immediate electron acceptor for the enzyme in this species is believed to be ubiquinone. Couples the redox reaction to proton translocation (for every two electrons transferred, four hydrogen ions are translocated across the cytoplasmic membrane), and thus conserves the redox energy in a proton gradient. This subunit may bind ubiquinone. This chain is NADH-quinone oxidoreductase subunit H, found in Rickettsia felis (strain ATCC VR-1525 / URRWXCal2) (Rickettsia azadi).